The primary structure comprises 68 residues: Small proline-rich protein 2K (68 aa).

Residues 21 to 26 (PKPCSP) form a 1; truncated repeat. Residues 21-65 (PKPCSPPKCPEPCPPPKCPETCPPQPCQRKCPPVLEAPCQQKCPS) form a 3.5 X 9 AA approximate tandem repeats region. Repeat copies occupy residues 27 to 35 (PKCPEPCPP), 36 to 44 (PKCPETCPP), and 45 to 53 (QPCQRKCPP).

Belongs to the cornifin (SPRR) family. Not expressed in uterus.

The protein localises to the cytoplasm. Cross-linked envelope protein of keratinocytes. It is a keratinocyte protein that first appears in the cell cytosol, but ultimately becomes cross-linked to membrane proteins by transglutaminase. All that results in the formation of an insoluble envelope beneath the plasma membrane. This Mus musculus (Mouse) protein is Small proline-rich protein 2K (Sprr2k).